A 265-amino-acid polypeptide reads, in one-letter code: Transglycosylase (265 aa).

The slt-type domain stretch occupies residues 19-98 (NLDPRLVAGV…NTALLAYHGG (80 aa)). Residue E32 is part of the active site. Residues 219–239 (LRGVVIIAAVAIVVVGLYFLF) traverse the membrane as a helical segment.

This sequence belongs to the transglycosylase Slt family. As to quaternary structure, heteromultimer composed of proteins P7 and P14.

It is found in the virion membrane. It catalyses the reaction Exolytic cleavage of the (1-&gt;4)-beta-glycosidic linkage between N-acetylmuramic acid (MurNAc) and N-acetylglucosamine (GlcNAc) residues in peptidoglycan, from either the reducing or the non-reducing ends of the peptidoglycan chains, with concomitant formation of a 1,6-anhydrobond in the MurNAc residue.. Functionally, component of the phage ejection machinery which acts as an exolysin. Muralytic protein involved in host peptidoglycan digestion necessary for viral DNA entry into the host cell. In terms of biological role, does not display any enzymatic activity. Required for DNA injection in the membrane transformation event. Involved in the formation of the membrane tail tube to connect the virus interior with the host cytosol. Essential for viral infectivity. This chain is Transglycosylase (VII), found in Acinetobacter calcoaceticus (Arthrobacter siderocapsulatus).